The following is a 140-amino-acid chain: MAKKKKYGVVVSRYGVNTGLQVGSYVPVADNSGAKEVMIISVPQVKTRLRRLPSAGVGDLVVVSVKKGTPQMRRQVVYAVVVRQRRPFRRPDGTWVSFEDNAVVIVNPDGTPRGSEVRGPIAREAAERWPRVAKIATMIV.

The protein belongs to the universal ribosomal protein uL14 family. As to quaternary structure, part of the 50S ribosomal subunit. Forms a cluster with proteins L3 and L24e, part of which may contact the 16S rRNA in 2 intersubunit bridges.

In terms of biological role, binds to 23S rRNA. Forms part of two intersubunit bridges in the 70S ribosome. The protein is Large ribosomal subunit protein uL14 of Aeropyrum pernix (strain ATCC 700893 / DSM 11879 / JCM 9820 / NBRC 100138 / K1).